A 614-amino-acid polypeptide reads, in one-letter code: Acid phosphatase (614 aa).

The first 22 residues, Met-1–Pro-22, serve as a signal peptide directing secretion. Positions Ile-80 to Pro-176 constitute a Fibronectin type-III domain. 13 N-linked (GlcNAc...) asparagine glycosylation sites follow: Asn-110, Asn-161, Asn-242, Asn-295, Asn-333, Asn-340, Asn-352, Asn-408, Asn-429, Asn-512, Asn-523, Asn-559, and Asn-578. A propeptide spanning residues Val-606–Ser-614 is cleaved from the precursor.

As to quaternary structure, monomer. Cu cation serves as cofactor. Glycosylated; probably with N-linked high-mannose oligosaccharides.

It is found in the secreted. It carries out the reaction a phosphate monoester + H2O = an alcohol + phosphate. Its activity is regulated as follows. Competitively inhibited by phosphomycin and inorganic orthophosphate. This is Acid phosphatase (aphA) from Aspergillus ficuum.